The chain runs to 1630 residues: Patronin (1630 aa).

The 133-residue stretch at 156–288 folds into the Calponin-homology (CH) domain; sequence QSYEQALLGW…LVVLLTDLFN (133 aa). 2 disordered regions span residues 311–333 and 355–446; these read NSFGGGLNRRSTPPNEYQTVQSN and ASMH…DQLN. The span at 319–333 shows a compositional bias: polar residues; that stretch reads RRSTPPNEYQTVQSN. At T322 the chain carries Phosphothreonine. Over residues 358-394 the composition is skewed to low complexity; it reads HSQQQQQLHQQQQHQQQYHQQPLQQHPSQSQLQIQQQ. Over residues 404–419 the composition is skewed to basic and acidic residues; sequence QAKEKTNVESKADERG. Residues S422, S431, S441, S460, S463, and S466 each carry the phosphoserine modification. A compositionally biased stretch (polar residues) spans 432 to 446; the sequence is QLTIENFGGSQDQLN. Residues 486–589 are disordered; sequence LQLGYDTDSG…SMPASPAAWQ (104 aa). T492 bears the Phosphothreonine mark. Residues S494, S496, S513, and S530 each carry the phosphoserine modification. Over residues 495–507 the composition is skewed to basic and acidic residues; that stretch reads GSEKQDRETEKYS. Over residues 513 to 529 the composition is skewed to polar residues; sequence SVDNVPTVSSHNLSNAG. The segment covering 576–587 has biased composition (low complexity); it reads SSTSSMPASPAA. Residues 601-639 are a coiled coil; it reads ENASKLSTIRMKLEEKRRRIEQDKRKIEMALLRHQEKED. Disordered stretches follow at residues 726–753, 872–967, 1005–1042, 1055–1186, 1200–1241, 1284–1315, and 1335–1459; these read VSAYSSRPPSRDPYQQQLHHQQQQPMPM, QQHQ…GMPM, DFVHQQQQQHQHQQQLQQQQRLQGHSGRGSSSEDYDSG, NLTY…NKYT, GAMS…NAEA, EAKARKEIEASQKREKEREKEEERARKKEEQM, and EREG…GVER. Composition is skewed to low complexity over residues 738-750 and 872-896; these read PYQQQLHHQQQQP and QQHQKQKQTWMNRPPSSAGAPSPGS. The segment covering 902–914 has biased composition (gly residues); sequence NGGGGGGGGGGGE. A compositionally biased stretch (polar residues) spans 919–947; it reads FQVQASPQHGQRQVSGSNGVQRQQSLTNL. Composition is skewed to low complexity over residues 956 to 967 and 1008 to 1036; these read PQNMGMPMGMPM and HQQQQQHQHQQQLQQQQRLQGHSGRGSSS. Phosphoserine is present on residues S1034, S1035, S1036, and S1067. The segment covering 1065–1074 has biased composition (polar residues); that stretch reads RPSIQANSFQ. A compositionally biased stretch (basic residues) spans 1105–1116; it reads RPKPPLRAKRSP. Over residues 1167 to 1184 the composition is skewed to polar residues; that stretch reads GLNNSNSVKSPGNATYNK. Positions 1218-1230 are enriched in low complexity; that stretch reads QSPQQTQQPMSPT. 2 positions are modified to phosphoserine: S1219 and S1228. The stretch at 1277–1343 forms a coiled coil; it reads QRRQQQEEAK…AEREGKTLDR (67 aa). The segment covering 1335 to 1348 has biased composition (basic and acidic residues); it reads EREGKTLDRPDLHV. Basic residues predominate over residues 1363 to 1374; sequence RQQRTTRPRPKT. Low complexity predominate over residues 1382–1400; the sequence is VDISEASSISSRGKKGSSS. S1398, S1399, and S1400 each carry phosphoserine. Polar residues predominate over residues 1401 to 1412; it reads NLTGYGQLSSNS. Residues 1450–1459 show a composition bias toward basic and acidic residues; sequence TSREPAGVER. In terms of domain architecture, CKK spans 1489–1623; sequence GPKLYKQPAA…QGKRVQLPSK (135 aa).

This sequence belongs to the CAMSAP1 family. Interacts with msps. Associates with the minus end of the microtubules.

The protein localises to the cytoplasm. It localises to the cytoskeleton. It is found in the microtubule organizing center. Its subcellular location is the spindle pole body. The protein resides in the centrosome. The protein localises to the perinuclear region. Functionally, key microtubule-organizing protein that specifically binds the minus-end of microtubules and regulates their dynamics and organization. Involved in mitotic spindle assembly. Regulates microtubule (MT) severing. Antagonizes the activity of the kinesin-13 depolymerase Klp10A thereby switching off the depolymerization of the MTs at their pole-associated minus ends, which turns off poleward flux and induces anaphase B spindle elongation. Involved in asymmetric cell division of sensory organ precursor (SOP) cells by playing a role in the asymmetric localization of Sara-expressing endosomes to the pIIa daughter cell but not to the pIIb cell. Klp98A targets Sara-expressing endosomes to the central spindle which is symmetrically arranged in early cell division. During late cytokinesis, central spindle asymmetry is generated by enrichment of Patronin on the pIIb side which protects microtubules from depolymerization by Klp10A while unprotected microtubules on the pIIa side are disassembled by Klp10A, leading to the asymmetric delivery of Sara-expressing endosomes to the pIIa daughter cell. In fat body cells, part of perinuclear non-centrosomal microtubule-organizing centers (ncMTOCs) which function to accommodate the organization of microtubule (MT) networks to control nuclear positioning and dynein motor-based retrograde endosomal trafficking. Within the ncMTOC, Msp300 and shot anchors the ncMTOC at the nuclear surface and recruits the MT minus-end regulators Patronin and Nin for assembly, anchoring and/or stabilization of circumferential and radial MTs at the ncMTOCs. This protein, and perhaps Nin, recruits msps to the ncMTOC for the gamma-tubulin-independent elongation of radial MTs. This is Patronin (Patronin) from Drosophila melanogaster (Fruit fly).